The sequence spans 1264 residues: MTARGKNVRIQSLATEDEIFVYDRRFVSEPENVELPELPSPEPFTPDTPPDTLTNQNDLQAWRNLYMARRSWALGLVERCGAMDKSIHEHNERTDIIHRAAGVALENLKTHVGNLENRFQEAQTWANDLLKEQRAALDGWQRALTTLESIPAPKVFPFLGRPSTPKEHRDRPTGTLRDFVDANEVQKAGAEAAAESSRFARQIDDVAEAVRGITADTQRLIDDQLPSGADAADGLQEMITFAKKISSDYEHVIALPNNQKTLANISRLALTHTQDLLPSMLDISAEIHAGLEEAVRRHNTAMKVALDHMRTISAIELRLADVQSQIINLNVQSDAFDVVFSVYHMPMVYGSILVESVRRREFNEKMKADSLTLAEEMAVFRDEEQRRRKKWLKSMGDFISLTETTTPGVEINLQGLDYEWPEVSRNDIESYIEHLKSRPAMASLADGLTQQYKDLDAPTRHQRRRAKAFKQGSIFDLSRSSLLLRSDDMLRSLREEKSKLEEKLKGSESRIRKLEDLLHRQSQLSRPVSGNFNLEFPSSPASPYPDELSRRSSVSSRRMSANQSSEDKTLAQRIVTLEAELNAERETVQRLQKEAHAERLSNTDKIQEAQSTKRDLIDNLEARQREFDEERRYLEGELKKYRLRTEELEEELDRITDSRDHAKQDADERINQLETELQNLHIHTEEELHRANDLLEQMQAQKMTEESLQQRINELEKQQSEIKATEQENLQTLQAAFMNLSPGGAVPAEIPSIIKAIEVLSEGLSIHVKNAEEKMAEAVAENKALEERMNQLETEVQDAKQSAEQRESELAQVRGELAQEKEKLAAVQSELHDERSKLNALQSQHADGDTGTDALRQRVVEDERKLGILSQRLAEVEAQARESEKEVCAWKNKLKAISESEREATTRIEIRGSRAKELSQQLFEQVEKMEHMLEQLGFTVIRQDGEIVVQRASKVNASSGIGDSLAQSGVVSVKPDPSLLDWMQAETAQEETDRYMAFLESLYQFDVDVFGDAVVKRVKDIELLARKWQKEARGYRDKYHRMQSEAHDKIAYRSFKEGDLALFLPTRNQAIRSWAAFNVGAPHYFLREQDAHKLQTRDWLLARITKIEERVVDLSKSMNGAHPDRRSIGGTSDAASIDDENPFELSDGLRWYLLDANEEKPGAPATPGLGKSTVAPAHVDARGSIRLKRTSNGGNVAKTLTKSLDSRRNSSSSKKGPPFAISQRANESTAELARPAEANTPLSPSAQEAASTPEEVRRDQLQGP.

Disordered regions lie at residues 528-567 (VSGNFNLEFPSSPASPYPDELSRRSSVSSRRMSANQSSED), 1118-1140 (MNGAHPDRRSIGGTSDAASIDDE), and 1180-1264 (DARG…LQGP). Positions 551–564 (RSSVSSRRMSANQS) are enriched in low complexity. A coiled-coil region spans residues 566–887 (EDKTLAQRIV…AQARESEKEV (322 aa)). Composition is skewed to polar residues over residues 1190–1201 (TSNGGNVAKTLT) and 1240–1250 (TPLSPSAQEAA). Over residues 1254 to 1264 (EEVRRDQLQGP) the composition is skewed to basic and acidic residues.

The protein belongs to the ATG11 family. As to quaternary structure, homodimer.

The protein localises to the preautophagosomal structure membrane. Its subcellular location is the vacuole membrane. Functionally, involved in cytoplasm to vacuole transport (Cvt), pexophagy, mitophagy and nucleophagy. Recruits mitochondria for their selective degradation via autophagy (mitophagy) during starvation. Works as scaffold proteins that recruit ATG proteins to the pre-autophagosome (PAS), the site of vesicle/autophagosome formation. Required for the Cvt vesicles completion. This Aspergillus fumigatus (strain ATCC MYA-4609 / CBS 101355 / FGSC A1100 / Af293) (Neosartorya fumigata) protein is Autophagy-related protein 11 (atg11).